The sequence spans 532 residues: Glucose-6-phosphate isomerase (532 aa).

The Proton donor role is filled by Glu330. Residues His359 and Lys461 contribute to the active site.

Belongs to the GPI family.

Its subcellular location is the cytoplasm. The catalysed reaction is alpha-D-glucose 6-phosphate = beta-D-fructose 6-phosphate. Its pathway is carbohydrate biosynthesis; gluconeogenesis. The protein operates within carbohydrate degradation; glycolysis; D-glyceraldehyde 3-phosphate and glycerone phosphate from D-glucose: step 2/4. Functionally, catalyzes the reversible isomerization of glucose-6-phosphate to fructose-6-phosphate. In Synechococcus sp. (strain CC9605), this protein is Glucose-6-phosphate isomerase.